Reading from the N-terminus, the 160-residue chain is 3-dehydroquinate dehydratase (160 aa).

The active-site Proton acceptor is the Tyr22. The substrate site is built by Asn73, His79, and Asp86. His99 (proton donor) is an active-site residue. Substrate is bound by residues Ile100–Ser101 and Arg110.

It belongs to the type-II 3-dehydroquinase family. As to quaternary structure, homododecamer.

The catalysed reaction is 3-dehydroquinate = 3-dehydroshikimate + H2O. It functions in the pathway metabolic intermediate biosynthesis; chorismate biosynthesis; chorismate from D-erythrose 4-phosphate and phosphoenolpyruvate: step 3/7. In terms of biological role, catalyzes a trans-dehydration via an enolate intermediate. This chain is 3-dehydroquinate dehydratase, found in Campylobacter lari (strain RM2100 / D67 / ATCC BAA-1060).